Consider the following 88-residue polypeptide: Small ribosomal subunit protein uS17 (88 aa).

The protein belongs to the universal ribosomal protein uS17 family. In terms of assembly, part of the 30S ribosomal subunit.

Its function is as follows. One of the primary rRNA binding proteins, it binds specifically to the 5'-end of 16S ribosomal RNA. The protein is Small ribosomal subunit protein uS17 of Lawsonia intracellularis (strain PHE/MN1-00).